Consider the following 274-residue polypeptide: Cytochrome b-c1 complex subunit Rieske, mitochondrial (274 aa).

The Mitochondrial matrix portion of the chain corresponds to 79 to 103 (SHTDIKVPDFSDYRRSEVLDKTKSS). A helical membrane pass occupies residues 104–140 (RESSDARKGFSYLVTAATAVGVTYAAKSIVTQFVSSM). At 141–274 (SASADVLAMS…FTGDDMVIVG (134 aa)) the chain is on the mitochondrial intermembrane side. A Rieske domain is found at 187-272 (EAAVELSQLR…YEFTGDDMVI (86 aa)). Positions 217, 219, 236, 239, and 241 each coordinate [2Fe-2S] cluster. Residues Cys222 and Cys238 are joined by a disulfide bond.

It belongs to the Rieske iron-sulfur protein family. In terms of assembly, component of the ubiquinol-cytochrome c oxidoreductase (cytochrome b-c1 complex, complex III, CIII), a multisubunit enzyme composed of 11 subunits. The complex is composed of 3 respiratory subunits cytochrome b, cytochrome c1 and Rieske protein UQCRFS1, 2 core protein subunits UQCRC1/QCR1 and UQCRC2/QCR2, and 6 low-molecular weight protein subunits UQCRH/QCR6, UQCRB/QCR7, UQCRQ/QCR8, UQCR10/QCR9, UQCR11/QCR10 and subunit 9, the cleavage product of Rieske protein UQCRFS1. The complex exists as an obligatory dimer and forms supercomplexes (SCs) in the inner mitochondrial membrane with NADH-ubiquinone oxidoreductase (complex I, CI) and cytochrome c oxidase (complex IV, CIV), resulting in different assemblies (supercomplex SCI(1)III(2)IV(1) and megacomplex MCI(2)III(2)IV(2)). Incorporation of the Rieske protein UQCRFS1 is the penultimate step in complex III assembly. Interacts with TTC19, which is involved in the clearance of UQCRFS1 fragments. As to quaternary structure, component of the ubiquinol-cytochrome c oxidoreductase (cytochrome b-c1 complex, complex III, CIII). Subunit 9 corresponds to the mitochondrial targeting sequence (MTS) of Rieske protein UQCRFS1. It is retained after processing and incorporated inside complex III, where it remains bound to the complex and localizes between the 2 core subunits UQCRC1/QCR1 and UQCRC2/QCR2. The cofactor is [2Fe-2S] cluster. Post-translationally, proteolytic processing is necessary for the correct insertion of UQCRFS1 in the complex III dimer. Several fragments are generated during UQCRFS1 insertion, most probably due to the endogenous matrix-processing peptidase (MPP) activity of the 2 core protein subunits UQCRC1/QCR1 and UQCRC2/QCR2, which are homologous to the 2 mitochondrial-processing peptidase (MPP) subunits beta-MPP and alpha-MPP respectively. The action of the protease is also necessary for the clearance of the UQCRFS1 fragments.

It is found in the mitochondrion inner membrane. The catalysed reaction is a quinol + 2 Fe(III)-[cytochrome c](out) = a quinone + 2 Fe(II)-[cytochrome c](out) + 2 H(+)(out). Component of the ubiquinol-cytochrome c oxidoreductase, a multisubunit transmembrane complex that is part of the mitochondrial electron transport chain which drives oxidative phosphorylation. The respiratory chain contains 3 multisubunit complexes succinate dehydrogenase (complex II, CII), ubiquinol-cytochrome c oxidoreductase (cytochrome b-c1 complex, complex III, CIII) and cytochrome c oxidase (complex IV, CIV), that cooperate to transfer electrons derived from NADH and succinate to molecular oxygen, creating an electrochemical gradient over the inner membrane that drives transmembrane transport and the ATP synthase. The cytochrome b-c1 complex catalyzes electron transfer from ubiquinol to cytochrome c, linking this redox reaction to translocation of protons across the mitochondrial inner membrane, with protons being carried across the membrane as hydrogens on the quinol. In the process called Q cycle, 2 protons are consumed from the matrix, 4 protons are released into the intermembrane space and 2 electrons are passed to cytochrome c. The Rieske protein is a catalytic core subunit containing a [2Fe-2S] iron-sulfur cluster. It cycles between 2 conformational states during catalysis to transfer electrons from the quinol bound in the Q(0) site in cytochrome b to cytochrome c1. Incorporation of UQCRFS1 is the penultimate step in complex III assembly. Functionally, component of the ubiquinol-cytochrome c oxidoreductase (cytochrome b-c1 complex, complex III, CIII). UQCRFS1 undergoes proteolytic processing once it is incorporated in the complex III dimer. One of the fragments, called subunit 9, corresponds to its mitochondrial targeting sequence (MTS). The proteolytic processing is necessary for the correct insertion of UQCRFS1 in the complex III dimer, but the persistence of UQCRFS1-derived fragments may prevent newly imported UQCRFS1 to be processed and assembled into complex III and is detrimental for the complex III structure and function. In Lagothrix lagotricha (Brown woolly monkey), this protein is Cytochrome b-c1 complex subunit Rieske, mitochondrial (UQCRFS1).